A 23-amino-acid polypeptide reads, in one-letter code: M-poneritoxin-Nc1a (23 aa).

This sequence belongs to the non-disulfide-bridged peptide (NDBP) superfamily. Medium-length antimicrobial peptide (group 3) family. Ponericin-W subfamily. Expressed by the venom gland.

The protein resides in the secreted. Its subcellular location is the target cell membrane. Membrane-perturbating peptide with multiple activities. It is insecticidal, since it induces contractile paralysis in insects (L.cuprina) during several hours, and death after 24 hours. It shows antibacterial activity with higher activity against Gram-positive than Gram-negative bacteria. It is also antiparasitic, since it potently inhibits the larval development of the major pathogenic nematode of ruminants (H.contortus, IC(50)=5.1 uM), but fails to reduce the motility of adult males of the other nematode B.malayi. It also shows cytotoxic activity against HEK293 cells (EC(50)=12-14 uM) and induces hemolysis in human erythrocytes (EC(50)=28.6-48.2 uM). In addition, it causes an important increase in intracellular calcium concentration on neuronal and epithelial cell lines, which supports a non-specific membrane perturbation mechanism of action. In vivo, it induces pain by intraplantar injection into mice, suggesting a defensive function against vertebrate predators. This is M-poneritoxin-Nc1a from Neoponera commutata (Large hunting ant).